The sequence spans 335 residues: Peroxidase 53 (335 aa).

Residues M1–A30 form the signal peptide. A Pyrrolidone carboxylic acid modification is found at Q31. 2 N-linked (GlcNAc...) asparagine glycosylation sites follow: N33 and N43. Intrachain disulfides connect C41-C121, C74-C79, C127-C329, and C206-C238. The active-site Proton acceptor is the H72. 5 residues coordinate Ca(2+): D73, V76, G78, D80, and S82. N165 is a glycosylation site (N-linked (GlcNAc...) asparagine). P169 contributes to the substrate binding site. N177 carries N-linked (GlcNAc...) asparagine glycosylation. Position 199 (H199) interacts with heme b. T200 is a Ca(2+) binding site. N215, N227, and N241 each carry an N-linked (GlcNAc...) asparagine glycan. Residues D251, T254, and D259 each contribute to the Ca(2+) site. The N-linked (GlcNAc...) asparagine glycan is linked to N297.

It belongs to the peroxidase family. Classical plant (class III) peroxidase subfamily. Ca(2+) is required as a cofactor. The cofactor is heme b. As to expression, mainly expressed in roots.

The protein resides in the secreted. It catalyses the reaction 2 a phenolic donor + H2O2 = 2 a phenolic radical donor + 2 H2O. Functionally, removal of H(2)O(2), oxidation of toxic reductants, biosynthesis and degradation of lignin, suberization, auxin catabolism, response to environmental stresses such as wounding, pathogen attack and oxidative stress. These functions might be dependent on each isozyme/isoform in each plant tissue. Closely linked to lignin formation by showing monolignol substrate specificity. The chain is Peroxidase 53 (PER53) from Arabidopsis thaliana (Mouse-ear cress).